Consider the following 247-residue polypeptide: MAPFWIALQFLTILPIELKTIPTAQQNGRAILFYPLVGLIIGGILFLVTCIFVKLPALLLAAIVFALWIWLTGGLHLDGLADTADAWVGGFGDKLRTLQIMKDPSCGPIGVLSIVIVCLLKFALIYVLIEQHQSLFLICIPILGRVVPSILFLTTPYVREKGLGRSLTDHLPKTASWIITGFVLLLPLYWEWQGLIAIISFLISLVYLRHVFIKRIGGITGDTVGAAIEIGETVLIFTFVVSYFYLV.

6 helical membrane-spanning segments follow: residues 31–51 (ILFY…VTCI), 55–75 (LPAL…TGGL), 109–129 (IGVL…YVLI), 135–155 (LFLI…FLTT), 183–203 (VLLL…SFLI), and 227–247 (AIEI…FYLV).

Belongs to the CobS family. It depends on Mg(2+) as a cofactor.

The protein resides in the cell inner membrane. The enzyme catalyses alpha-ribazole + adenosylcob(III)inamide-GDP = adenosylcob(III)alamin + GMP + H(+). The catalysed reaction is alpha-ribazole 5'-phosphate + adenosylcob(III)inamide-GDP = adenosylcob(III)alamin 5'-phosphate + GMP + H(+). It participates in cofactor biosynthesis; adenosylcobalamin biosynthesis; adenosylcobalamin from cob(II)yrinate a,c-diamide: step 7/7. Functionally, joins adenosylcobinamide-GDP and alpha-ribazole to generate adenosylcobalamin (Ado-cobalamin). Also synthesizes adenosylcobalamin 5'-phosphate from adenosylcobinamide-GDP and alpha-ribazole 5'-phosphate. The polypeptide is Adenosylcobinamide-GDP ribazoletransferase (Acinetobacter baumannii (strain ACICU)).